The primary structure comprises 482 residues: Potential E3 ubiquitin-protein ligase ariadne-2 (482 aa).

The tract at residues 125 to 334 is TRIAD supradomain; the sequence is AKGYCSVCAM…SEYYECSRYK (210 aa). Residues cysteine 129, cysteine 132, cysteine 145, histidine 147, cysteine 150, cysteine 153, cysteine 172, cysteine 177, cysteine 218, cysteine 223, cysteine 239, cysteine 242, cysteine 247, cysteine 250, histidine 255, cysteine 260, cysteine 287, and cysteine 290 each contribute to the Zn(2+) site. Residues 129-177 form an RING-type 1 zinc finger; that stretch reads CSVCAMDGYTELPHLTCGHCFCEHCWKSHVESRLSEGVASRIECMESEC. The IBR-type zinc-finger motif lies at 198-260; that stretch reads LKYERFLLRD…GADYHAPTSC (63 aa). An RING-type 2; atypical zinc finger spans residues 287–316; sequence CPQCHSCIEKAGGCNHIQCTRCRHHFCWMC. The active site involves cysteine 300. Residues cysteine 305, cysteine 308, cysteine 313, cysteine 316, histidine 323, and cysteine 330 each coordinate Zn(2+). The stretch at 433 to 459 forms a coiled coil; that stretch reads FEYQQAQLEKEVEELAWAVERADGTAR.

Belongs to the RBR family. Ariadne subfamily.

It localises to the nucleus. It carries out the reaction [E2 ubiquitin-conjugating enzyme]-S-ubiquitinyl-L-cysteine + [acceptor protein]-L-lysine = [E2 ubiquitin-conjugating enzyme]-L-cysteine + [acceptor protein]-N(6)-ubiquitinyl-L-lysine.. Its function is as follows. Might act as an E3 ubiquitin-protein ligase, or as part of E3 complex, which accepts ubiquitin from specific E2 ubiquitin-conjugating enzymes, such as UBC-2/UBE2L3, and then transfers it to substrates. This Caenorhabditis elegans protein is Potential E3 ubiquitin-protein ligase ariadne-2.